We begin with the raw amino-acid sequence, 596 residues long: Myosin light chain kinase 2, skeletal/cardiac muscle (596 aa).

The interval 1-224 is disordered; that stretch reads MATENGAVEL…AGQAKMQGDT (224 aa). An N-acetylalanine modification is found at A2. Over residues 40-63 the composition is skewed to basic and acidic residues; the sequence is DPKKAPDPPTLKKDAKAPASEKGD. Over residues 88-104 the composition is skewed to low complexity; the sequence is EGSAGPPAALPQQTATP. 3 positions are modified to phosphoserine: S143, S149, and S151. Basic and acidic residues predominate over residues 189–209; it reads RPAKAEEGKNILAESQKEVGE. One can recognise a Protein kinase domain in the interval 285–540; it reads MNSKEALGGG…AAQCLAHPWL (256 aa). ATP contacts are provided by residues 291–299 and K314; that span reads LGGGKFGAV. D406 functions as the Proton acceptor in the catalytic mechanism. The residue at position 445 (T445) is a Phosphothreonine. The calmodulin-binding stretch occupies residues 574-586; sequence IAVSAANRFKKIS.

Belongs to the protein kinase superfamily. CAMK Ser/Thr protein kinase family. As to quaternary structure, may interact with centrin. Heart and skeletal muscles. Increased expression in the apical tissue compared to the interventricular septal tissue.

It is found in the cytoplasm. It carries out the reaction L-seryl-[myosin light chain] + ATP = O-phospho-L-seryl-[myosin light chain] + ADP + H(+). The enzyme catalyses L-threonyl-[myosin light chain] + ATP = O-phospho-L-threonyl-[myosin light chain] + ADP + H(+). Its function is as follows. Implicated in the level of global muscle contraction and cardiac function. Phosphorylates a specific serine in the N-terminus of a myosin light chain. The polypeptide is Myosin light chain kinase 2, skeletal/cardiac muscle (MYLK2) (Homo sapiens (Human)).